The chain runs to 511 residues: Adenosine deaminase 2 (511 aa).

The N-terminal stretch at 1 to 29 is a signal peptide; that stretch reads MLVDGPSERPALCFLLLAVAMSFFGSALS. The segment at 30–100 is dimerization; it reads IDETRAHLLL…HLIERSQVFN (71 aa). The Zn(2+) site is built by His112 and His114. A substrate-binding site is contributed by Asp115. Asn127 carries an N-linked (GlcNAc...) asparagine glycan. The PRB domain stretch occupies residues 127–185; it reads NVTYRPHCHICFTPRGIMQFRFAHPTPRPSEKCSKWILLEDYRKRVQNVTEFDDSLLRN. A disulfide bridge links Cys137 with Cys159. N-linked (GlcNAc...) asparagine glycans are attached at residues Asn174 and Asn185. Substrate contacts are provided by residues 204–211, His293, and Gly326; that span reads WSKFETIF. His356 contacts Zn(2+). Glu359 serves as the catalytic Proton donor. Asn378 carries N-linked (GlcNAc...) asparagine glycosylation. The active-site Proton acceptor is His384. Residue Asp441 coordinates Zn(2+). Asp442 contributes to the substrate binding site.

The protein belongs to the metallo-dependent hydrolases superfamily. Adenosine and AMP deaminases family. ADGF subfamily. Homodimer. Interacts with adenosine receptors. Binds heparin. Zn(2+) serves as cofactor. Detected in blood plasma (at protein level). Widely expressed, with most abundant expression in human adult heart, lung, lymphoblasts, and placenta as well as fetal lung, liver, and kidney. In embryo, expressed in the outflow tract and atrium of the developing heart, the VII/VIII cranial nerve ganglion, and the notochord.

Its subcellular location is the secreted. It carries out the reaction adenosine + H2O + H(+) = inosine + NH4(+). Adenosine deaminase that may contribute to the degradation of extracellular adenosine, a signaling molecule that controls a variety of cellular responses. Requires elevated adenosine levels for optimal enzyme activity. Binds to cell surfaces via proteoglycans and may play a role in the regulation of cell proliferation and differentiation, independently of its enzyme activity. The protein is Adenosine deaminase 2 of Homo sapiens (Human).